Reading from the N-terminus, the 248-residue chain is uncharacterized protein (248 aa).

NADP(+) is bound at residue 8–32 (IVTGAAQGIGQAYAQALAREGASVV). A substrate-binding site is contributed by Ser-143. Residue Tyr-153 is the Proton acceptor of the active site.

The protein belongs to the short-chain dehydrogenases/reductases (SDR) family.

This is an uncharacterized protein from Mycobacterium tuberculosis (strain CDC 1551 / Oshkosh).